A 270-amino-acid chain; its full sequence is Protein-ADP-ribose hydrolase (270 aa).

Positions 73–267 (VSVKDCQKTN…LYDTYLQKEN (195 aa)) constitute a Macro domain. 3 residues coordinate ADP-D-ribose: Asp-92, Ile-93, and Asn-106. Residues Cys-112, His-117, and Cys-119 each coordinate Zn(2+). Residues Cys-119, Ile-120, Asp-121, Ser-212, Thr-213, Gly-214, Glu-215, and Phe-216 each coordinate ADP-D-ribose.

This sequence belongs to the MacroD-type family. Zn-Macro subfamily. Requires Zn(2+) as cofactor.

The enzyme catalyses 4-O-(ADP-D-ribosyl)-L-aspartyl-[protein] + H2O = L-aspartyl-[protein] + ADP-D-ribose + H(+). In terms of biological role, ADP-ribosylhydrolase that specifically reverses the SirTM-mediated mono-ADP-ribosylation at an asparatate residue of GcvH-L, by releasing ADP-ribose from the target protein. May play a role in the regulation of the response to host-induced oxidative stress. The protein is Protein-ADP-ribose hydrolase of Streptococcus pyogenes serotype M3 (strain ATCC BAA-595 / MGAS315).